The chain runs to 445 residues: DDB1- and CUL4-associated factor 13 (445 aa).

Lysine 49 carries the post-translational modification N6-acetyllysine. 7 WD repeats span residues 64–104 (GHRD…CIRT), 107–146 (AHEG…YGEE), 149–191 (PLYT…PVCS), 194–234 (WGFD…PLKK), 236–276 (ILEM…TPVM), 280–319 (DHVS…SREV), and 323–362 (KRMQ…KLGV). Residues 353-441 (KANASEKLGV…IVSERKKHVV (89 aa)) form a required for nucleolar location region.

Belongs to the WD repeat DCAF13/WDSOF1 family. As to quaternary structure, component of the DCX(DCAF13) E3 ubiquitin ligase complex, at least composed of CUL4 (CUL4A or CUL4B), DDB1, DCAF13 and RBX1. Interacts (via WD40 domain) with DDB1. Interacts with ESR1 and LATS1. As to expression, uniformly distributed in trophectoderm cells and inner cells mass in blastocyst embryos. Expressed in oocytes as early as the primordial follicle stage. Endometrial expression increases during decidualization and is highly expressed in decidua.

The protein localises to the nucleus. The protein resides in the nucleolus. It participates in protein modification; protein ubiquitination. In terms of biological role, part of the small subunit (SSU) processome, first precursor of the small eukaryotic ribosomal subunit. During the assembly of the SSU processome in the nucleolus, many ribosome biogenesis factors, an RNA chaperone and ribosomal proteins associate with the nascent pre-rRNA and work in concert to generate RNA folding, modifications, rearrangements and cleavage as well as targeted degradation of pre-ribosomal RNA by the RNA exosome. Participates in the 18S rRNA processing in growing oocytes, being essential for oocyte nonsurrounded nucleolus (NSN) to surrounded nucleolus (SN) transition. Functionally, substrate-recognition component of a DCX (DDB1-CUL4-X-box) E3 ubiquitin-protein ligase complex that plays a key role in embryo preimplantation and is required for normal meiotic cycle progression in oocytes. Acts as a maternal factor that regulates oocyte and zygotic chromatin tightness during maternal to zygotic transition. Also involved in the transformation of the endometrium into the decidua, known as decidualization, providing a solid foundation for implantation of blastocysts. Recognizes the histone methyltransferases SUV39H1 and SUV39H2 and directs them to polyubiquitination and proteasomal degradation, which facilitates the H3K9me3 removal and early zygotic gene expression, essential steps for progressive genome reprogramming and the establishment of pluripotency during preimplantation embryonic development. Supports the spindle assembly and chromosome condensation during oocyte meiotic division by targeting the polyubiquitination and degradation of PTEN, a lipid phosphatase that inhibits PI3K pathway as well as oocyte growth and maturation. Targets PMP22 for polyubiquitination and proteasomal degradation. In Mus musculus (Mouse), this protein is DDB1- and CUL4-associated factor 13 (Dcaf13).